Reading from the N-terminus, the 542-residue chain is Hydroxylamine reductase (542 aa).

Residues C3, C6, C15, and C21 each contribute to the [4Fe-4S] cluster site. Positions 238, 262, 307, 398, 426, 451, 485, and 487 each coordinate hybrid [4Fe-2O-2S] cluster. C398 is subject to Cysteine persulfide.

This sequence belongs to the HCP family. [4Fe-4S] cluster is required as a cofactor. Hybrid [4Fe-2O-2S] cluster serves as cofactor.

The protein resides in the cytoplasm. It carries out the reaction A + NH4(+) + H2O = hydroxylamine + AH2 + H(+). Catalyzes the reduction of hydroxylamine to form NH(3) and H(2)O. The protein is Hydroxylamine reductase of Microcystis aeruginosa (strain NIES-843 / IAM M-2473).